The chain runs to 114 residues: Fumarate reductase subunit D (114 aa).

3 helical membrane-spanning segments follow: residues 24–44, 50–70, and 92–112; these read VSAIFLPVVILIIGLLLPFGL, LITFAYSWIGKLVILVLTIFP, and GGFIFYGLATIYTVWVLFAVI.

The protein belongs to the FrdD family. In terms of assembly, part of an enzyme complex containing four subunits: a flavoprotein (FrdA), an iron-sulfur protein (FrdB), and two hydrophobic anchor proteins (FrdC and FrdD).

Its subcellular location is the cell inner membrane. In terms of biological role, anchors the catalytic components of the fumarate reductase complex to the cell membrane, binds quinones. The polypeptide is Fumarate reductase subunit D (Haemophilus influenzae (strain ATCC 51907 / DSM 11121 / KW20 / Rd)).